Here is a 213-residue protein sequence, read N- to C-terminus: Large ribosomal subunit protein uL3 (213 aa).

The protein belongs to the universal ribosomal protein uL3 family. In terms of assembly, part of the 50S ribosomal subunit. Forms a cluster with proteins L14 and L19.

Its function is as follows. One of the primary rRNA binding proteins, it binds directly near the 3'-end of the 23S rRNA, where it nucleates assembly of the 50S subunit. The polypeptide is Large ribosomal subunit protein uL3 (Petrotoga mobilis (strain DSM 10674 / SJ95)).